We begin with the raw amino-acid sequence, 284 residues long: Tropomyosin Per a 7.0101 (284 aa).

The stretch at Ala-22 to Lys-266 forms a coiled coil.

Belongs to the tropomyosin family. In terms of assembly, homodimer.

In terms of biological role, tropomyosin, in association with the troponin complex, plays a central role in the calcium dependent regulation of muscle contraction. This is Tropomyosin Per a 7.0101 from Periplaneta americana (American cockroach).